The following is a 718-amino-acid chain: Tegument protein UL46 (718 aa).

2 disordered regions span residues 433–510 and 581–611; these read SAGP…EPPA and TADD…DDES. Residues 444–454 are compositionally biased toward gly residues; that stretch reads GPGGHRAGGGT. Residues 455-467 show a composition bias toward basic and acidic residues; it reads CREKIQRARRDNE.

It belongs to the herpesviridae HHV-1 VP11/12 protein family. Interacts with VP16. Interacts with host LCK, PIK3R1, SHC1 AND GRB2; these interactions promote the activation of the PI3K/AKT pathway. Interacts with host YWHAB. Interacts with ICP0; this interaction targets UL46 for degradation by the proteasome. Interacts (via N-terminus) with host TMEM173. Interacts (via C-terminus) with host TBK1. Interacts with host DOK2. Post-translationally, phosphorylated by host LCK. The phosphorylation seems to be lymphocyte-specific.

It is found in the virion tegument. The protein resides in the host cytoplasm. Its subcellular location is the host cell membrane. Its function is as follows. Plays a role in the activation of the host PI3K/AKT pathway to promote cell survival. Interacts with and activates host LCK and thereby recruits downstream partners SHC1, GRB2 and PI3KR1 in order to activate the PI3K pathway by phosphorylating host AKT on its activating residues. This mechanism is inhibited by the viral protein US3 that instead promotes incorporation of UL46 into virions. Plays a role in the inhibition of TMEM173/STING-mediated type I interferon production. Interacts with host DOK2 and induces its degradation. This immune evasion mechanism to inactivate T-cells may play an important role during pathogenesis. In Homo sapiens (Human), this protein is Tegument protein UL46.